Consider the following 532-residue polypeptide: Di/tripeptide-binding protein 2 (532 aa).

Residues 1 to 24 (MRPRSALRYSLLLLAFAASAAIQA) form the signal peptide.

The protein belongs to the bacterial solute-binding protein 5 family. As to quaternary structure, the complex is composed of two ATP-binding proteins (DppD and DppF), two transmembrane proteins (DppB and DppC) and a solute-binding protein (DppA2). Five orthologous SBPs (DppA1-A5) are present in P.aeruginosa, which increases the substrate specificity of the DppBCDF transporter.

In terms of biological role, part of the ABC transporter DppABCDF involved in the uptake of various di/tripeptides. Shows high flexibility on substrate recognition. Efficiently uses tripeptides. This Pseudomonas aeruginosa (strain UCBPP-PA14) protein is Di/tripeptide-binding protein 2.